The sequence spans 598 residues: MFS transporter L2 (598 aa).

The next 3 membrane-spanning stretches (helical) occupy residues 83–103 (IAAFLSLCIIVLMAALDATSI), 122–142 (FWAGTSFLLTSTIFQPVLGSF), and 150–170 (SLIYISLVFFLAGSIIPAVAN). A glycan (N-linked (GlcNAc...) asparagine) is linked at Asn171. A run of 5 helical transmembrane segments spans residues 183–203 (GVGGGGIIALTEMVVVDTVPL), 212–232 (FFGMMWSFGTVAGPLIGGAFA), 239–259 (WVFWINLPFLGIGTVLITVFL), 277–297 (WIGMVLFLGSTTGFLIPITWG), and 309–329 (LVPLIVSAAGIVAFIVHQEKF). Residue Asn342 is glycosylated (N-linked (GlcNAc...) asparagine). 6 helical membrane-spanning segments follow: residues 346-366 (ALLYLTTVIHGIILWAILYFM), 383-403 (VALFPWTFTVAPGAVATGIAI), 411-431 (WANWAGWFLATLGSGLLILLK), 439-459 (WIFLNLVGGIGTGILFPAMAL), 476-496 (MFSFFRAFGQTLGVAIGGVVF), and 550-570 (YIWIVATVLAGVSLVATLFID).

This sequence belongs to the major facilitator superfamily.

The protein resides in the membrane. MFS transporter; part of the gene cluster that mediates the biosynthesis of squalestatin S1 (SQS1, also known as zaragozic acid A), a lead compound for the treatment of hyper-cholesterolemia by targeting squalene synthase (SS). The sequence is that of MFS transporter L2 from Phoma sp. (strain ATCC 20986 / MF5453).